Here is a 311-residue protein sequence, read N- to C-terminus: Porphobilinogen deaminase (311 aa).

Cys243 is subject to S-(dipyrrolylmethanemethyl)cysteine.

Belongs to the HMBS family. As to quaternary structure, monomer. Dipyrromethane serves as cofactor.

The enzyme catalyses 4 porphobilinogen + H2O = hydroxymethylbilane + 4 NH4(+). It functions in the pathway porphyrin-containing compound metabolism; protoporphyrin-IX biosynthesis; coproporphyrinogen-III from 5-aminolevulinate: step 2/4. In terms of biological role, tetrapolymerization of the monopyrrole PBG into the hydroxymethylbilane pre-uroporphyrinogen in several discrete steps. In Blochmanniella floridana, this protein is Porphobilinogen deaminase.